The following is a 1142-amino-acid chain: Zinc finger MYM-type protein 1 (1142 aa).

A Glycyl lysine isopeptide (Lys-Gly) (interchain with G-Cter in SUMO2) cross-link involves residue lysine 25. 3 consecutive MYM-type zinc fingers follow at residues 110–148, 160–203, and 210–245; these read QLFC…PKDV, KTFC…QYEV, and HNLC…SSSL. Lysine 284 participates in a covalent cross-link: Glycyl lysine isopeptide (Lys-Gly) (interchain with G-Cter in SUMO2). The segment at 300–331 adopts an MYM-type 4 zinc-finger fold; sequence ELFCSINCFSAYSKAKMESSSVSVVSVVHDTS. The span at 385–396 shows a compositional bias: polar residues; the sequence is KSSPSEPSNAVA. Residues 385–413 are disordered; sequence KSSPSEPSNAVASSSTEQPSVSPSSSVFS. Low complexity predominate over residues 397–413; sequence SSSTEQPSVSPSSSVFS. A TTF-type zinc finger spans residues 452-538; the sequence is KSRSIKKSCC…YQFCDGAVSD (87 aa).

The protein localises to the nucleus. The chain is Zinc finger MYM-type protein 1 (ZMYM1) from Homo sapiens (Human).